We begin with the raw amino-acid sequence, 337 residues long: uncharacterized protein (337 aa).

The F-box domain maps to 22 to 76 (PFRLLSLPTLALKNVLLHIDFIDLLELSLASKKCEIYMKTCCLKIDSLHFHFRRI).

This is an uncharacterized protein from Caenorhabditis elegans.